The following is a 234-amino-acid chain: Glycerol uptake facilitator protein (234 aa).

Helical transmembrane passes span 9–29 (FLGTLILILLGNGVVAGVVLP), 37–57 (GWIVITMGWGIAVAVAVFVSG), 61–81 (PAYLNPAVTIGVALKGGLPWA), 83–103 (VLPYILAQFAGAMLGQILVWL), 135–155 (LISEILGTFVLVLTIFALGLY), and 159–179 (AGIGTFAVGTLIVGIGLSLGG). Residues 65–67 (NPA) carry the NPA 1 motif. The short motif at 186–188 (NPA) is the NPA 2 element. A helical membrane pass occupies residues 214–234 (WIPVVGPVIGAALAVLVFSLF).

Belongs to the MIP/aquaporin (TC 1.A.8) family.

It is found in the cell membrane. The enzyme catalyses glycerol(in) = glycerol(out). Its function is as follows. Mediates glycerol diffusion across the cytoplasmic membrane via a pore-type mechanism. The sequence is that of Glycerol uptake facilitator protein (glpF) from Streptococcus pneumoniae serotype 4 (strain ATCC BAA-334 / TIGR4).